The sequence spans 496 residues: Amidophosphoribosyltransferase (496 aa).

The propeptide occupies 1-21; the sequence is MNQSHSFPTDDPLDGDTLHEE. Cys-22 functions as the Nucleophile in the catalytic mechanism. The Glutamine amidotransferase type-2 domain maps to 22 to 241; the sequence is CGVFGILGHP…NGEVIICEIQ (220 aa).

The protein in the C-terminal section; belongs to the purine/pyrimidine phosphoribosyltransferase family.

The enzyme catalyses 5-phospho-beta-D-ribosylamine + L-glutamate + diphosphate = 5-phospho-alpha-D-ribose 1-diphosphate + L-glutamine + H2O. Its pathway is purine metabolism; IMP biosynthesis via de novo pathway; N(1)-(5-phospho-D-ribosyl)glycinamide from 5-phospho-alpha-D-ribose 1-diphosphate: step 1/2. Functionally, catalyzes the formation of phosphoribosylamine from phosphoribosylpyrophosphate (PRPP) and glutamine. The protein is Amidophosphoribosyltransferase of Rhizobium etli (strain ATCC 51251 / DSM 11541 / JCM 21823 / NBRC 15573 / CFN 42).